We begin with the raw amino-acid sequence, 440 residues long: Tubulin beta-3 chain (440 aa).

Positions 2, 60, 129, 133, 134, 135, 195, and 217 each coordinate GTP. E60 is a binding site for Mg(2+). Residues 411-440 form a disordered region; that stretch reads SEYQQYQDATADEEGEYEDEEEEEPEHGYE. The segment covering 420 to 440 has biased composition (acidic residues); the sequence is TADEEGEYEDEEEEEPEHGYE.

Belongs to the tubulin family. As to quaternary structure, dimer of alpha and beta chains. A typical microtubule is a hollow water-filled tube with an outer diameter of 25 nm and an inner diameter of 15 nM. Alpha-beta heterodimers associate head-to-tail to form protofilaments running lengthwise along the microtubule wall with the beta-tubulin subunit facing the microtubule plus end conferring a structural polarity. Microtubules usually have 13 protofilaments but different protofilament numbers can be found in some organisms and specialized cells. Mg(2+) serves as cofactor.

It is found in the cytoplasm. Its subcellular location is the cytoskeleton. In terms of biological role, tubulin is the major constituent of microtubules, a cylinder consisting of laterally associated linear protofilaments composed of alpha- and beta-tubulin heterodimers. Microtubules grow by the addition of GTP-tubulin dimers to the microtubule end, where a stabilizing cap forms. Below the cap, tubulin dimers are in GDP-bound state, owing to GTPase activity of alpha-tubulin. The polypeptide is Tubulin beta-3 chain (TUBB3) (Pisum sativum (Garden pea)).